The primary structure comprises 694 residues: Frizzled-2 (694 aa).

The first 22 residues, 1 to 22 (MRHNRLKVLILGLVLLLTSCRA), serve as a signal peptide directing secretion. Over 23-315 (DGPLHSADHG…GPFFSNDEKD (293 aa)) the chain is Extracellular. The 122-residue stretch at 59 to 180 (DPNLRCEEIT…GDPDNLCMEQ (122 aa)) folds into the FZ domain. 5 disulfides stabilise this stretch: C64/C125, C72/C118, C109/C147, C136/C177, and C140/C164. N78 is a glycosylation site (N-linked (GlcNAc...) asparagine). The interval 175 to 253 (NLCMEQPSYT…QGEKASGKEC (79 aa)) is disordered. The span at 187–224 (GSGGSSGGSGGSGSGSGSGGKRKQGGSGSGGSGAGGSS) shows a compositional bias: gly residues. An N-linked (GlcNAc...) asparagine glycan is attached at N288. A helical transmembrane segment spans residues 316 to 336 (FAGLWIALWSGLCFCSTLMTL). Residues 337 to 352 (TTFIIDTERFKYPERP) lie on the Cytoplasmic side of the membrane. The helical transmembrane segment at 353-373 (IVFLSACYFMVAVGYLSRNFL) threads the bilayer. Residues 374–397 (QNEEIACDGLLLRESSTGPHSCTL) lie on the Extracellular side of the membrane. The chain crosses the membrane as a helical span at residues 398 to 418 (VFLLTYFFGMASSIWWVILSF). Over 419 to 439 (TWFLAAGLKWGNEAITKHSQY) the chain is Cytoplasmic. Residues 440–460 (FHLAAWLIPTVQSVAVLLLSA) form a helical membrane-spanning segment. The Extracellular portion of the chain corresponds to 461 to 482 (VDGDPILGICYVGNLNPDHLKT). A helical transmembrane segment spans residues 483–503 (FVLAPLFVYLVIGTTFLMAGF). Topologically, residues 504 to 534 (VSLFRIRSVIKQQGGVGAGVKADKLEKLMIR) are cytoplasmic. The chain crosses the membrane as a helical span at residues 535–555 (IGIFSVLYTVPATIVIGCYLY). Over 556–584 (EAAYFEDWIKALACPCAQVKGPGKKPLYS) the chain is Extracellular. Residues 585-605 (VLMLKYFMALAVGITSGVWIW) form a helical membrane-spanning segment. Residues 606 to 694 (SGKTLESWRR…VLKQPAASHV (89 aa)) are Cytoplasmic-facing. A Lys-Thr-X-X-X-Trp motif, mediates interaction with the PDZ domain of Dvl family members motif is present at residues 608–613 (KTLESW). Positions 692-694 (SHV) match the PDZ-binding motif.

This sequence belongs to the G-protein coupled receptor Fz/Smo family. Interacts with ATP6AP2.

The protein localises to the cell membrane. Its function is as follows. Receptor for Wnt proteins. Most of frizzled receptors are coupled to the beta-catenin canonical signaling pathway, which leads to the activation of disheveled proteins, inhibition of GSK-3 kinase, nuclear accumulation of beta-catenin and activation of Wnt target genes. A second signaling pathway involving PKC and calcium fluxes has been seen for some family members, but it is not yet clear if it represents a distinct pathway or if it can be integrated in the canonical pathway, as PKC seems to be required for Wnt-mediated inactivation of GSK-3 kinase. Both pathways seem to involve interactions with G-proteins. Required to coordinate the cytoskeletons of epidermal cells to produce a parallel array of cuticular hairs and bristles. The sequence is that of Frizzled-2 (fz2) from Drosophila melanogaster (Fruit fly).